A 534-amino-acid polypeptide reads, in one-letter code: Serine/threonine-protein phosphatase 2B catalytic subunit (534 aa).

Residues D88, H90, and D116 each coordinate Fe cation. Residues D116 and N148 each contribute to the Zn(2+) site. H149 (proton donor) is an active-site residue. Positions 197 and 279 each coordinate Zn(2+). 2 disordered regions span residues L375 to S398 and P475 to A534. Composition is skewed to basic and acidic residues over residues P475 to Q497 and Q524 to A534.

The protein belongs to the PPP phosphatase family. PP-2B subfamily. In terms of assembly, composed of two components (A and B), the A component is the catalytic subunit and the B component confers calcium sensitivity. Fe(3+) serves as cofactor. The cofactor is Zn(2+).

It catalyses the reaction O-phospho-L-seryl-[protein] + H2O = L-seryl-[protein] + phosphate. The catalysed reaction is O-phospho-L-threonyl-[protein] + H2O = L-threonyl-[protein] + phosphate. Its function is as follows. Calcium-dependent, calmodulin-stimulated protein phosphatase. This subunit may have a role in the calmodulin activation of calcineurin. This Aspergillus fumigatus (strain ATCC MYA-4609 / CBS 101355 / FGSC A1100 / Af293) (Neosartorya fumigata) protein is Serine/threonine-protein phosphatase 2B catalytic subunit (cnaA).